The chain runs to 256 residues: Small ribosomal subunit protein eS1 (256 aa).

N-acetylalanine; partial is present on alanine 2.

This sequence belongs to the eukaryotic ribosomal protein eS1 family. In terms of assembly, component of the small ribosomal subunit. Mature ribosomes consist of a small (40S) and a large (60S) subunit. The 40S subunit contains about 33 different proteins and 1 molecule of RNA (18S). The 60S subunit contains about 49 different proteins and 3 molecules of RNA (25S, 5.8S and 5S).

It localises to the cytoplasm. This is Small ribosomal subunit protein eS1 from Fusarium vanettenii (strain ATCC MYA-4622 / CBS 123669 / FGSC 9596 / NRRL 45880 / 77-13-4) (Fusarium solani subsp. pisi).